The sequence spans 324 residues: MTAELKVASIDNHISSLSGEVSIPQAPPEFKSGFIGIIGRPNVGKSTLMNQLVGQKIAITSPVAQTTRNRLRGIVTTPEAQLIFVDTPGIHKPHHQLGEVLVKNAKLAIESVDVVLFVVDGAVACGAGDRFIADLLIHSKTPVILGINKVDQQPPDSQKIDESYQQLASAYQWPTVKFSAKTGAELPQLQELLVEHLEHGPYYYPPDLVTDQPERFIMGELIREQILLLTREEVPHSVAIAIDLVEETPTITRVLATIHVERDSQKGILIGKGGSMLKSIGSAAREQIQKLIAGKVYLELFVKVQPKWRHSRVRLAELGYRVEE.

Positions 31-199 constitute an Era-type G domain; that stretch reads KSGFIGIIGR…QELLVEHLEH (169 aa). The tract at residues 39-46 is G1; that stretch reads GRPNVGKS. 39–46 lines the GTP pocket; the sequence is GRPNVGKS. Positions 65-69 are G2; sequence QTTRN. Residues 86 to 89 are G3; sequence DTPG. GTP-binding positions include 86-90 and 148-151; these read DTPGI and NKVD. Residues 148–151 form a G4 region; the sequence is NKVD. The G5 stretch occupies residues 178–180; it reads FSA. Residues 230-306 enclose the KH type-2 domain; the sequence is TREEVPHSVA…YLELFVKVQP (77 aa).

This sequence belongs to the TRAFAC class TrmE-Era-EngA-EngB-Septin-like GTPase superfamily. Era GTPase family. As to quaternary structure, monomer.

Its subcellular location is the cytoplasm. It is found in the cell inner membrane. Its function is as follows. An essential GTPase that binds both GDP and GTP, with rapid nucleotide exchange. Plays a role in 16S rRNA processing and 30S ribosomal subunit biogenesis and possibly also in cell cycle regulation and energy metabolism. The protein is GTPase Era of Nostoc sp. (strain PCC 7120 / SAG 25.82 / UTEX 2576).